A 354-amino-acid chain; its full sequence is Homoserine O-succinyltransferase (354 aa).

C146 (acyl-thioester intermediate) is an active-site residue. Substrate-binding residues include K167 and S196. The active-site Proton acceptor is the H239. Residue E241 is part of the active site. R253 is a binding site for substrate.

Belongs to the MetA family.

Its subcellular location is the cytoplasm. It carries out the reaction L-homoserine + succinyl-CoA = O-succinyl-L-homoserine + CoA. Its pathway is amino-acid biosynthesis; L-methionine biosynthesis via de novo pathway; O-succinyl-L-homoserine from L-homoserine: step 1/1. Functionally, transfers a succinyl group from succinyl-CoA to L-homoserine, forming succinyl-L-homoserine. The polypeptide is Homoserine O-succinyltransferase (Methylobacter tundripaludum (strain ATCC BAA-1195 / DSM 17260 / SV96)).